Here is a 321-residue protein sequence, read N- to C-terminus: AA9 family lytic polysaccharide monooxygenase C (321 aa).

The signal sequence occupies residues 1-18 (MKLQLIIPFSFLISYVSA). His-19 contributes to the Cu(2+) binding site. The N-linked (GlcNAc...) asparagine glycan is linked to Asn-33. Cystine bridges form between Cys-57/Cys-191 and Cys-161/Cys-242. Position 103 (His-103) interacts with Cu(2+). Residues His-177 and Gln-186 each contribute to the O2 site. Tyr-188 lines the Cu(2+) pocket. The N-linked (GlcNAc...) asparagine glycan is linked to Asn-195. The region spanning 283–319 (GTAAIYAQCGGQGWTGATVCASGSKCVVSSAFYSQCL) is the CBM1 domain.

Belongs to the polysaccharide monooxygenase AA9 family. It depends on Cu(2+) as a cofactor.

The protein resides in the secreted. The enzyme catalyses [(1-&gt;4)-beta-D-glucosyl]n+m + reduced acceptor + O2 = 4-dehydro-beta-D-glucosyl-[(1-&gt;4)-beta-D-glucosyl]n-1 + [(1-&gt;4)-beta-D-glucosyl]m + acceptor + H2O.. Functionally, major lytic polysaccharide monooxygenase (LPMO) that depolymerizes crystalline and amorphous polysaccharides via the oxidation of scissile alpha- or beta-(1-4)-glycosidic bonds, yielding C1 and C4 oxidation products. Catalysis by LPMOs requires the reduction of the active-site copper from Cu(II) to Cu(I) by a reducing agent and H(2)O(2) or O(2) as a cosubstrate. The chain is AA9 family lytic polysaccharide monooxygenase C from Botryotinia fuckeliana (strain B05.10) (Noble rot fungus).